We begin with the raw amino-acid sequence, 107 residues long: uncharacterized protein (107 aa).

Polar residues predominate over residues 1–14; sequence MTERNASGRMNTKG. The interval 1–20 is disordered; that stretch reads MTERNASGRMNTKGRSIKET.

It is found in the mitochondrion. This is an uncharacterized protein from Arabidopsis thaliana (Mouse-ear cress).